An 839-amino-acid polypeptide reads, in one-letter code: Autophagy-related protein 9A (839 aa).

Residues 1 to 20 (MAQFDTEYQRLEASYSDSPP) form a disordered region. Residue Ala-2 is modified to N-acetylalanine. Over 2-61 (AQFDTEYQRLEASYSDSPPGEEDLLVHVAEGSKSPWHHIENLDLFFSRVYNLHQKNGFTC) the chain is Cytoplasmic. Residues 8–11 (YQRL) carry the Tyrosine-based sorting signal motif. Ser-14, Ser-16, and Ser-18 each carry phosphoserine. A helical membrane pass occupies residues 62–84 (MLIGEIFELMQFLFVVAFTTFLV). Over 85-128 (SCVDYDILFANKMVNHSLHPTEPVKVTLPDAFLPAQVCSARIQE) the chain is Lumenal. The N-linked (GlcNAc...) asparagine glycan is linked to Asn-99. A helical membrane pass occupies residues 129–154 (NGSLITILVIAGVFWIHRLIKFIYNI). Over 155–290 (CCYWEIHSFY…ELAQRLSNRI (136 aa)) the chain is Cytoplasmic. The stretch at 291–301 (LWIGIANFLLC) is an intramembrane region. The Cytoplasmic segment spans residues 302-319 (PLILIWQILYAFFSYAEV). Residues 320–328 (LKREPGALG) lie within the membrane without spanning it. Over 329–371 (ARCWSLYGRCYLRHFNELEHELQSRLNRGYKPASKYMNCFLSP) the chain is Cytoplasmic. The helical transmembrane segment at 372–397 (LLTLLAKNGAFFAGSILAVLIALTIY) threads the bilayer. The Lumenal portion of the chain corresponds to 398–406 (DEDVLAVEH). Residues 407 to 424 (VLTTVTLLGVTVTVCRSF) form a helical membrane-spanning segment. Residues 425-470 (IPDQHMVFCPEQLLRVILAHIHYMPDHWQGNAHRSQTRDEFAQLFQ) lie on the Cytoplasmic side of the membrane. Residues 471–480 (YKAVFILEEL) lie within the membrane without spanning it. The Cytoplasmic portion of the chain corresponds to 481–483 (LSP). Residues 484–492 (IVTPLILIF) lie within the membrane without spanning it. The Cytoplasmic segment spans residues 493 to 839 (CLRPRALEII…DELPPQVHKV (347 aa)). A phosphoserine mark is found at Ser-656, Ser-735, Ser-738, Ser-741, and Ser-828. Disordered regions lie at residues 656-686 (SPLQ…SSGS) and 717-839 (HKQQ…VHKV). The segment covering 724 to 736 (EPERHVWHRRESD) has biased composition (basic and acidic residues). Acidic residues-rich tracts occupy residues 737–747 (ESGESAPDEGG) and 823–832 (VPEEGSEDEL).

This sequence belongs to the ATG9 family. As to quaternary structure, homotrimer; forms a homotrimer with a central pore that forms a path between the two membrane leaflets. Interacts (via cytoplasmic its C-terminus) with ATG2A. Interacts with SUPT20H. Interacts (via the tyrosine-based sorting signal motif) with AP4M1; promoting association with the AP-4 complex. Interacts with ARFIP1 and ARFIP2. Interacts with PI4K2A and PI4KB. Interacts with ATG4A; the interaction is direct and promotes ATG9A trafficking. Ufmylated in a DDRGK1 dependent manner.

It localises to the preautophagosomal structure membrane. It is found in the cytoplasmic vesicle. The protein resides in the autophagosome membrane. The protein localises to the golgi apparatus. Its subcellular location is the trans-Golgi network membrane. It localises to the late endosome membrane. It is found in the recycling endosome membrane. The protein resides in the endoplasmic reticulum membrane. The protein localises to the mitochondrion membrane. The catalysed reaction is a 1,2-diacyl-sn-glycero-3-phosphocholine(in) = a 1,2-diacyl-sn-glycero-3-phosphocholine(out). It catalyses the reaction a 1,2-diacyl-sn-glycero-3-phospho-L-serine(in) = a 1,2-diacyl-sn-glycero-3-phospho-L-serine(out). It carries out the reaction a 1,2-diacyl-sn-glycero-3-phosphoethanolamine(in) = a 1,2-diacyl-sn-glycero-3-phosphoethanolamine(out). Phospholipid scramblase involved in autophagy by mediating autophagosomal membrane expansion. Cycles between the preautophagosomal structure/phagophore assembly site (PAS) and the cytoplasmic vesicle pool and supplies membrane for the growing autophagosome. Lipid scramblase activity plays a key role in preautophagosomal structure/phagophore assembly by distributing the phospholipids that arrive through ATG2 (ATG2A or ATG2B) from the cytoplasmic to the luminal leaflet of the bilayer, thereby driving autophagosomal membrane expansion. Also required to supply phosphatidylinositol 4-phosphate to the autophagosome initiation site by recruiting the phosphatidylinositol 4-kinase beta (PI4KB) in a process dependent on ARFIP2, but not ARFIP1. In addition to autophagy, also plays a role in necrotic cell death. This Homo sapiens (Human) protein is Autophagy-related protein 9A.